A 333-amino-acid polypeptide reads, in one-letter code: MNLYRRYGWELTLAALLVLEILLFGLSNSRMLDINVLLFSTSDFICIGIVALPLTMVIVSGGIDISFGSTIGLCAIFLGIVFQAGVPMSVAIPLTVLVGALCGLINAGLILYTGVNPLVITLGTLYLFGGSALLLSGLSGATGYEGIGGFPAAFTDFANQTLFGLPIPLVIFMLCVLLFWLLMHRTHSGRHVFLIGQSSRVARYSALPIARTLCMLYAMTGVASAIAAILLVSYFGSARSDLGASFLMPAITAVVLGGANIYGGSGSILGTALAVLLVGYLQQGLQMIGTPNQISSALSGALLILVVVGRSISLHRHLIYEWLQRRRSRKASV.

10 helical membrane-spanning segments follow: residues 7-27 (YGWE…FGLS), 45-65 (ICIG…GIDI), 67-87 (FGST…AGVP), 90-110 (VAIP…AGLI), 118-138 (LVIT…LSGL), 162-182 (LFGL…FWLL), 212-232 (TLCM…ILLV), 240-260 (SDLG…GGAN), 261-281 (IYGG…VGYL), and 288-308 (IGTP…LVVV).

This sequence belongs to the binding-protein-dependent transport system permease family. AraH/RbsC subfamily. As to quaternary structure, the complex is composed of two ATP-binding proteins (LsrA), two transmembrane proteins (LsrC and LsrD) and a solute-binding protein (LsrB).

It is found in the cell inner membrane. In terms of biological role, part of the ABC transporter complex LsrABCD involved in autoinducer 2 (AI-2) import. Probably responsible for the translocation of the substrate across the membrane. The polypeptide is Autoinducer 2 import system permease protein LsrD (lsrD) (Yersinia pseudotuberculosis serotype IB (strain PB1/+)).